We begin with the raw amino-acid sequence, 340 residues long: KH domain-containing RNA-binding protein QKI (340 aa).

In terms of domain architecture, KH spans Tyr-87–Val-153. The short motif at Pro-275–Pro-278 is the SH3-binding element. The Nuclear localization signal signature appears at Arg-323–Arg-329.

The protein belongs to the quaking family. In terms of assembly, homodimer; does not require RNA to homodimerize.

The protein localises to the cytoplasm. Its subcellular location is the nucleus. Functionally, RNA reader protein, which recognizes and binds specific RNAs, thereby regulating RNA metabolic processes, such as pre-mRNA splicing, circular RNA (circRNA) formation, mRNA export, mRNA stability and/or translation. Involved in various cellular processes, such as mRNA storage into stress granules, apoptosis, interferon response, glial cell fate and development. Binds to the 5'-NACUAAY-N(1,20)-UAAY-3' RNA core sequence. Acts as a mRNA modification reader that specifically recognizes and binds mRNA transcripts modified by internal N(7)-methylguanine (m7G). Promotes the formation of circular RNAs (circRNAs): acts by binding to sites flanking circRNA-forming exons. CircRNAs are produced by back-splicing circularization of pre-mRNAs. Required to protect and promote stability of mRNAs which promotes oligodendrocyte differentiation. Acts as an important regulator of muscle development. This Gallus gallus (Chicken) protein is KH domain-containing RNA-binding protein QKI.